The following is a 995-amino-acid chain: tRNA wybutosine-synthesizing protein 2/3/4 (995 aa).

The tRNA wybutosine-synthesizing protein 3 homolog stretch occupies residues M1–G212. Kelch repeat units follow at residues E284–D335, F336–T386, K387–S436, Q437–H486, and I488–G535. The interval E661–R995 is tRNA wybutosine-synthesizing protein 2 homolog. Residues K828 and D896–N897 contribute to the S-adenosyl-L-methionine site.

The protein in the C-terminal section; belongs to the class I-like SAM-binding methyltransferase superfamily. TRM5/TYW2 family. This sequence in the N-terminal section; belongs to the TYW3 family.

The catalysed reaction is 4-demethyl-7-[(3S)-3-amino-3-carboxypropyl]wyosine(37) in tRNA(Phe) + S-adenosyl-L-methionine = 7-[(3S)-3-amino-3-carboxypropyl]wyosine(37) in tRNA(Phe) + S-adenosyl-L-homocysteine + H(+). It catalyses the reaction 4-demethylwyosine(37) in tRNA(Phe) + S-adenosyl-L-methionine = 4-demethyl-7-[(3S)-3-amino-3-carboxypropyl]wyosine(37) in tRNA(Phe) + S-methyl-5'-thioadenosine + H(+). The protein operates within tRNA modification; wybutosine-tRNA(Phe) biosynthesis. Its function is as follows. S-adenosyl-L-methionine-dependent transferase that acts as a component of the wybutosine biosynthesis pathway. Wybutosine is a hyper modified guanosine with a tricyclic base found at the 3'-position adjacent to the anticodon of eukaryotic phenylalanine tRNA. The sequence is that of tRNA wybutosine-synthesizing protein 2/3/4 from Arabidopsis thaliana (Mouse-ear cress).